The sequence spans 278 residues: MGFIDDEVKRLGDVIASLEDRVRSLETRDFSGKPVTTAEQLRMVLMGPPGAGKGTQAPKIKEKFNCCHLATGDMLRAQVAKGTALGKQAKKIMNEGGLVSDDIVIGMIKDELENNKECQGGFILDGFPRTVPQAEGLDAMLRERNLPLQHAVELKIDDSLLVARITGRLVHPASGRSYHRIFNPPKDDMKDDITGEPLVQRSDDNAEALRKRLETYHKQTAPVVGYYQNTGIWKAIDASQEPAQVWKSLLAIFEGDKAKASSAGSGIMSKIASAAKSS.

50 to 55 (GAGKGT) is an ATP binding site. The segment at 70-99 (ATGDMLRAQVAKGTALGKQAKKIMNEGGLV) is NMP. AMP is bound by residues Thr-71, Arg-76, 97–99 (GLV), 126–129 (GFPR), and Gln-133. The segment at 167 to 204 (GRLVHPASGRSYHRIFNPPKDDMKDDITGEPLVQRSDD) is LID. ATP contacts are provided by residues Arg-168 and 177 to 178 (SY). AMP contacts are provided by Arg-201 and Arg-212. Gln-240 lines the ATP pocket.

This sequence belongs to the adenylate kinase family. AK2 subfamily. Monomer.

It localises to the cytoplasm. Its subcellular location is the cytosol. The protein resides in the mitochondrion intermembrane space. The catalysed reaction is AMP + ATP = 2 ADP. Catalyzes the reversible transfer of the terminal phosphate group between ATP and AMP. Plays an important role in cellular energy homeostasis and in adenine nucleotide metabolism. Adenylate kinase activity is critical for regulation of the phosphate utilization and the AMP de novo biosynthesis pathways. This is Adenylate kinase (adk-1) from Neurospora crassa (strain ATCC 24698 / 74-OR23-1A / CBS 708.71 / DSM 1257 / FGSC 987).